The primary structure comprises 127 residues: MNIRATRVGEQMKKELSDIISRRLKDPRIGFVTVTDVRVTGDLQQAKVYISVLGDDKQRENTLKALEKAKGFIRSEIGQRIRLRKTPEIFFEIDETMEYGSRIEQLIRQISSDDHPAKEADGEPNNG.

This sequence belongs to the RbfA family. In terms of assembly, monomer. Binds 30S ribosomal subunits, but not 50S ribosomal subunits or 70S ribosomes.

It localises to the cytoplasm. One of several proteins that assist in the late maturation steps of the functional core of the 30S ribosomal subunit. Associates with free 30S ribosomal subunits (but not with 30S subunits that are part of 70S ribosomes or polysomes). Required for efficient processing of 16S rRNA. May interact with the 5'-terminal helix region of 16S rRNA. In Geobacillus kaustophilus (strain HTA426), this protein is Ribosome-binding factor A.